The chain runs to 266 residues: Thiazole synthase (266 aa).

K106 acts as the Schiff-base intermediate with DXP in catalysis. 1-deoxy-D-xylulose 5-phosphate-binding positions include G167, 193 to 194 (AG), and 215 to 216 (NT).

The protein belongs to the ThiG family. Homotetramer. Forms heterodimers with either ThiH or ThiS.

The protein resides in the plastid. It is found in the chloroplast. The catalysed reaction is [ThiS sulfur-carrier protein]-C-terminal-Gly-aminoethanethioate + 2-iminoacetate + 1-deoxy-D-xylulose 5-phosphate = [ThiS sulfur-carrier protein]-C-terminal Gly-Gly + 2-[(2R,5Z)-2-carboxy-4-methylthiazol-5(2H)-ylidene]ethyl phosphate + 2 H2O + H(+). It participates in cofactor biosynthesis; thiamine diphosphate biosynthesis. Its function is as follows. Catalyzes the rearrangement of 1-deoxy-D-xylulose 5-phosphate (DXP) to produce the thiazole phosphate moiety of thiamine. Sulfur is provided by the thiocarboxylate moiety of the carrier protein ThiS. In vitro, sulfur can be provided by H(2)S. The sequence is that of Thiazole synthase from Cyanidium caldarium (Red alga).